The chain runs to 182 residues: MDSSRILKYESRLNFGSLCARRIRAKSEIPAVVYGKESDVLHIKIASNEFNKRFAKFTDNTVLILSDGKVERCVFIKDVSENITKGLIYHVDFYEVDRNRDIERYIAIKFVGASIGVKEGGTLSVLRTKIKVKALPLDLPEFVEVDLTPVKKGHQITFKDIVLPENVKLAEEDENLSILLVK.

It belongs to the bacterial ribosomal protein bL25 family. CTC subfamily. Part of the 50S ribosomal subunit; part of the 5S rRNA/L5/L18/L25 subcomplex. Contacts the 5S rRNA. Binds to the 5S rRNA independently of L5 and L18.

Functionally, this is one of the proteins that binds to the 5S RNA in the ribosome where it forms part of the central protuberance. In Borrelia turicatae (strain 91E135), this protein is Large ribosomal subunit protein bL25.